A 187-amino-acid polypeptide reads, in one-letter code: Lipid A acyltransferase PagP (187 aa).

Positions 1-26 (MIVAKKYFLVLSFLFVQFALLPQAFS) are cleaved as a signal peptide. Catalysis depends on residues H59, D102, and S103.

This sequence belongs to the lipid A palmitoyltransferase family. Homodimer.

The protein localises to the cell outer membrane. It carries out the reaction a lipid A + a 1,2-diacyl-sn-glycero-3-phosphocholine = a hepta-acyl lipid A + a 2-acyl-sn-glycero-3-phosphocholine. The catalysed reaction is a lipid IVA + a 1,2-diacyl-sn-glycero-3-phosphocholine = a lipid IVB + a 2-acyl-sn-glycero-3-phosphocholine. It catalyses the reaction a lipid IIA + a 1,2-diacyl-sn-glycero-3-phosphocholine = a lipid IIB + a 2-acyl-sn-glycero-3-phosphocholine. Its function is as follows. Transfers a fatty acid residue from the sn-1 position of a phospholipid to the N-linked hydroxyfatty acid chain on the proximal unit of lipid A or its precursors. The sequence is that of Lipid A acyltransferase PagP from Citrobacter koseri (strain ATCC BAA-895 / CDC 4225-83 / SGSC4696).